The chain runs to 579 residues: Type II methyltransferase M.BseCI (579 aa).

This sequence belongs to the N(4)/N(6)-methyltransferase family.

The enzyme catalyses a 2'-deoxyadenosine in DNA + S-adenosyl-L-methionine = an N(6)-methyl-2'-deoxyadenosine in DNA + S-adenosyl-L-homocysteine + H(+). Functionally, a gamma subtype methylase, recognizes the double-stranded sequence 5'-ATCGAT-3', methylation on A-5 on both strands, and protects the DNA from cleavage by the BanIII endonuclease. The chain is Type II methyltransferase M.BseCI from Geobacillus stearothermophilus (Bacillus stearothermophilus).